The chain runs to 119 residues: Ubiquinone biosynthesis accessory factor UbiK (119 aa).

Residues 79-99 (LLRTREKLALLEQRLSELEAR) adopt a coiled-coil conformation. A compositionally biased stretch (basic and acidic residues) spans 96–106 (LEARDKPEEVK). The disordered stretch occupies residues 96-119 (LEARDKPEEVKPAPAIPPVDPQQE). Residues 109–119 (PAIPPVDPQQE) are compositionally biased toward pro residues.

This sequence belongs to the UbiK family. Homotrimer.

It is found in the cytoplasm. Its pathway is cofactor biosynthesis; ubiquinone biosynthesis. Its function is as follows. Required for efficient ubiquinone (coenzyme Q) biosynthesis under aerobic conditions. UbiK is probably an accessory factor of Ubi enzymes and facilitates ubiquinone biosynthesis by acting as an assembly factor, a targeting factor, or both. Dispensable for ubiquinone biosynthesis under anaerobiosis. Required for proliferation in macrophages and virulence in mice. Significantly contributes to colonization and invasion as well as host inflammation and innate immunity after infection. In vitro, has membrane fusogenic activity at acidic pH. The sequence is that of Ubiquinone biosynthesis accessory factor UbiK from Salmonella typhimurium (strain LT2 / SGSC1412 / ATCC 700720).